Here is a 443-residue protein sequence, read N- to C-terminus: C4-dicarboxylate transport protein (443 aa).

The next 9 helical transmembrane spans lie at 17–37 (PFYS…ILLG), 57–77 (LVKM…IAGM), 92–112 (LYFL…ANVV), 139–159 (EQSI…GAFA), 161–181 (GDIL…AMVG), 201–221 (LVAI…AFTI), 234–254 (MLIG…LGAV), 320–340 (IYMT…LSWG), and 368–388 (AATL…ILGI).

The protein belongs to the dicarboxylate/amino acid:cation symporter (DAACS) (TC 2.A.23) family.

Its subcellular location is the cell inner membrane. Its function is as follows. Responsible for the transport of dicarboxylates such as succinate, fumarate, and malate from the periplasm across the membrane. The chain is C4-dicarboxylate transport protein from Rhizobium leguminosarum bv. trifolii (strain WSM2304).